Consider the following 438-residue polypeptide: Glutamate-1-semialdehyde 2,1-aminomutase (438 aa).

Lysine 272 is subject to N6-(pyridoxal phosphate)lysine.

The protein belongs to the class-III pyridoxal-phosphate-dependent aminotransferase family. HemL subfamily. In terms of assembly, homodimer. The cofactor is pyridoxal 5'-phosphate.

It localises to the cytoplasm. It catalyses the reaction (S)-4-amino-5-oxopentanoate = 5-aminolevulinate. Its pathway is porphyrin-containing compound metabolism; protoporphyrin-IX biosynthesis; 5-aminolevulinate from L-glutamyl-tRNA(Glu): step 2/2. It functions in the pathway porphyrin-containing compound metabolism; chlorophyll biosynthesis. This is Glutamate-1-semialdehyde 2,1-aminomutase from Chloroflexus aggregans (strain MD-66 / DSM 9485).